The sequence spans 88 residues: Apolipoprotein C-I (88 aa).

The N-terminal stretch at 1–26 (MRLFIALPVLIVVVAMALEGPAPAQA) is a signal peptide.

This sequence belongs to the apolipoprotein C1 family.

It localises to the secreted. In terms of biological role, inhibitor of lipoprotein binding to the low density lipoprotein (LDL) receptor, LDL receptor-related protein, and very low density lipoprotein (VLDL) receptor. Associates with high density lipoproteins (HDL) and the triacylglycerol-rich lipoproteins in the plasma and makes up about 10% of the protein of the VLDL and 2% of that of HDL. Appears to interfere directly with fatty acid uptake and is also the major plasma inhibitor of cholesteryl ester transfer protein (CETP). Modulates the interaction of APOE with beta-migrating VLDL and inhibits binding of beta-VLDL to the LDL receptor-related protein. Binds free fatty acids and reduces their intracellular esterification. The sequence is that of Apolipoprotein C-I (Apoc1) from Grammomys surdaster (African woodland thicket rat).